A 467-amino-acid chain; its full sequence is Chlorophenol O-methyltransferase (467 aa).

Residues 1 to 41 (MAELRAPSSLSTERNGSASNTDVDKQKLNHLYQNGNKKTGS) form a disordered region. Polar residues-rich tracts occupy residues 8–21 (SSLS…ASNT) and 31–41 (LYQNGNKKTGS). Asp-320 provides a ligand contact to S-adenosyl-L-methionine. The Proton acceptor role is filled by His-368.

This sequence belongs to the class I-like SAM-binding methyltransferase superfamily. Cation-independent O-methyltransferase family.

The catalysed reaction is 2,4,6-trichlorophenol + S-adenosyl-L-methionine = 2,4,6-trichloroanisole + S-adenosyl-L-homocysteine. S-adenosyl-L-homocysteine acts as a competitive inhibitor. Also strongly inhibited by low concentrations of several metal ions, such as Cu(2+), Hg(2+), Zn(2+), and Ag(+), and to a lesser extent by p-chloromercuribenzoic acid, but it is not significantly affected by several thiols or other thiol reagents. Functionally, chlorophenol O-methyltransferase that methylates chlorophenols into chloroanisoles which are thought to be responsible for cork taint of wines. The only single chlorophenol (CP) methylated is 2-CP; neither 3-CP nor 4-CP are effective substrates. Within the dichlorophenols (DCPs), 2,4-DCP supports the highest rate of O-methylation, and the activity decreases in the following order: 2,3-DCP, 2,5-DCP, 2,6-DCP, and 3,4-DCP. Within the trichlorophenol (TCP) group, the maximal activity is observed with 2,3,4-TCP, whereas there is increasingly reduced activity with 2,4,5-TCP, 2,4,6-TCP, and 2,3,6-TCP. The only tetrachlorophenol (TeCP) that is methylated is 2,3,4,5-TeCP, since no activity can be detected with 2,3,4,6-TeCP and 2,3,5,6-TeCP. Is also able to methylate other halogenated phenols containing fluoro or bromo substituents, whereas other hydroxylated compounds, such as hydroxylated benzoic acids, hydroxybenzaldehydes, phenol, 2-metoxyphenol, and dihydroxybenzene, were not methylated. The sequence is that of Chlorophenol O-methyltransferase from Trichoderma longibrachiatum.